The sequence spans 309 residues: Succinate dehydrogenase [ubiquinone] iron-sulfur subunit 3, mitochondrial (309 aa).

Residues 1-22 (MSSVLRLLGRRICNPAAEKVRL) constitute a mitochondrion transit peptide. Residues 69–160 (FKIYRWNPDK…PTIITPLPHM (92 aa)) form the 2Fe-2S ferredoxin-type domain. 3 residues coordinate [2Fe-2S] cluster: Cys120, Cys125, and Cys140. A 4Fe-4S ferredoxin-type domain is found at 202–232 (DRKKLDGLYECILCACCTTSCPSYWWNPEEF). Residues Cys212, Cys215, and Cys218 each coordinate [4Fe-4S] cluster. Residue Cys222 coordinates [3Fe-4S] cluster. Position 227 (Trp227) interacts with a ubiquinone. 2 residues coordinate [3Fe-4S] cluster: Cys270 and Cys276. [4Fe-4S] cluster is bound at residue Cys280.

It belongs to the succinate dehydrogenase/fumarate reductase iron-sulfur protein family. Component of complex II composed of eight subunits in plants: four classical SDH subunits SDH1, SDH2, SDH3 and SDH4 (a flavoprotein (FP), an iron-sulfur protein (IP), and a cytochrome b composed of a large and a small subunit.), as well as four subunits unknown in mitochondria from bacteria and heterotrophic eukaryotes. [2Fe-2S] cluster is required as a cofactor. It depends on [3Fe-4S] cluster as a cofactor. The cofactor is [4Fe-4S] cluster.

The protein localises to the mitochondrion inner membrane. It catalyses the reaction a quinone + succinate = fumarate + a quinol. The protein operates within carbohydrate metabolism; tricarboxylic acid cycle; fumarate from succinate (eukaryal route): step 1/1. Iron-sulfur protein (IP) subunit of succinate dehydrogenase (SDH) that is involved in complex II of the mitochondrial electron transport chain and is responsible for transferring electrons from succinate to ubiquinone (coenzyme Q). The sequence is that of Succinate dehydrogenase [ubiquinone] iron-sulfur subunit 3, mitochondrial (SDH2-3) from Arabidopsis thaliana (Mouse-ear cress).